A 126-amino-acid polypeptide reads, in one-letter code: UPF0538 protein C2orf76 (126 aa).

It belongs to the UPF0538 family.

In Homo sapiens (Human), this protein is UPF0538 protein C2orf76 (C2orf76).